The sequence spans 57 residues: UPF0391 membrane protein Nwi_2359 (57 aa).

Helical transmembrane passes span 4-24 and 30-50; these read WVVT…GGIA and IAKI…VVGF.

It belongs to the UPF0391 family.

It is found in the cell membrane. This chain is UPF0391 membrane protein Nwi_2359, found in Nitrobacter winogradskyi (strain ATCC 25391 / DSM 10237 / CIP 104748 / NCIMB 11846 / Nb-255).